The following is a 719-amino-acid chain: Polyribonucleotide nucleotidyltransferase (719 aa).

Mg(2+)-binding residues include D507 and D513. Residues P573 to I633 enclose the KH domain. One can recognise an S1 motif domain in the interval G658 to E719.

The protein belongs to the polyribonucleotide nucleotidyltransferase family. It depends on Mg(2+) as a cofactor.

It localises to the cytoplasm. The catalysed reaction is RNA(n+1) + phosphate = RNA(n) + a ribonucleoside 5'-diphosphate. Functionally, involved in mRNA degradation. Catalyzes the phosphorolysis of single-stranded polyribonucleotides processively in the 3'- to 5'-direction. The protein is Polyribonucleotide nucleotidyltransferase of Campylobacter jejuni subsp. jejuni serotype O:23/36 (strain 81-176).